A 91-amino-acid polypeptide reads, in one-letter code: DNA-directed RNA polymerase subunit omega (91 aa).

It belongs to the RNA polymerase subunit omega family. In terms of assembly, the RNAP catalytic core consists of 2 alpha, 1 beta, 1 beta' and 1 omega subunit. When a sigma factor is associated with the core the holoenzyme is formed, which can initiate transcription.

The enzyme catalyses RNA(n) + a ribonucleoside 5'-triphosphate = RNA(n+1) + diphosphate. In terms of biological role, promotes RNA polymerase assembly. Latches the N- and C-terminal regions of the beta' subunit thereby facilitating its interaction with the beta and alpha subunits. The sequence is that of DNA-directed RNA polymerase subunit omega from Pectobacterium atrosepticum (strain SCRI 1043 / ATCC BAA-672) (Erwinia carotovora subsp. atroseptica).